Here is a 100-residue protein sequence, read N- to C-terminus: UPF0213 protein YhbQ (100 aa).

In terms of domain architecture, GIY-YIG spans 2–77 (TPWFLYLIRT…KQLTKRQKER (76 aa)).

The protein belongs to the UPF0213 family.

The protein is UPF0213 protein YhbQ of Escherichia coli O1:K1 / APEC.